Consider the following 336-residue polypeptide: Glycerol-3-phosphate dehydrogenase [NAD(P)+] (336 aa).

The NADPH site is built by S11, W12, and K106. The sn-glycerol 3-phosphate site is built by K106, G134, and S136. A138 serves as a coordination point for NADPH. 5 residues coordinate sn-glycerol 3-phosphate: K189, D242, S252, R253, and N254. K189 acts as the Proton acceptor in catalysis. Position 253 (R253) interacts with NADPH. Residues V277 and E279 each contribute to the NADPH site.

It belongs to the NAD-dependent glycerol-3-phosphate dehydrogenase family.

It is found in the cytoplasm. The enzyme catalyses sn-glycerol 3-phosphate + NAD(+) = dihydroxyacetone phosphate + NADH + H(+). It carries out the reaction sn-glycerol 3-phosphate + NADP(+) = dihydroxyacetone phosphate + NADPH + H(+). It functions in the pathway membrane lipid metabolism; glycerophospholipid metabolism. Catalyzes the reduction of the glycolytic intermediate dihydroxyacetone phosphate (DHAP) to sn-glycerol 3-phosphate (G3P), the key precursor for phospholipid synthesis. This is Glycerol-3-phosphate dehydrogenase [NAD(P)+] from Agathobacter rectalis (strain ATCC 33656 / DSM 3377 / JCM 17463 / KCTC 5835 / VPI 0990) (Eubacterium rectale).